The chain runs to 615 residues: MILDKVNSPEDLKRLSLEELLLLAEEIRSEIIRVTAQNGGHLASSLGAVELVLALHRVFDSPRDRILFDVGHQAYAHKLVTGRKDRFHTLRKEGGISGFTKVSESPHDAITAGHASTSLANALGMVLARDLMGEDYHVVAVIGDGALTGGMALAALNKIGELQKRMLIVLNDNEMSISENVGALNKYFKELQIRKWVQDAEKLGKNILERISPQLFGLVDRAKEAAKLLLHQENPFYAWGIRYVGPVDGHDLKGLVHILEHLKALDGPTLLHVVTKKGKGYKVAEADPIYWHGPPGFDPKKPEKVSKGYTWSQAFGDAVTELAHMEPRLFVLTPAMREGSGLVRYSLEHPERYLDVGICEDVAVTTAAGLALRGMKPIVAIYSTFLQRAYDQVIHDVAIENLPVVFAIDRAGIVGADGATHHGVFDIAYLRTVPNLQIAAPKDALELRAMLKKALEVGGPVAIRYPRDNVERAPEGVWPEIAWGKWEVLKEGTEAYILAFGKTLKYALEAAGDDPRVGVVNARFLKPLDREMLRALSRYKLLTVEDHQRMGGFGSAVLEALNEMGLKPEVQVLGLPDRFFEHGAIPSLHRQAGIDAEGIRKALAAMGVAVVHERA.

Residues H72 and 113 to 115 (GHA) each bind thiamine diphosphate. D144 contributes to the Mg(2+) binding site. Thiamine diphosphate contacts are provided by residues 145–146 (GA), N173, Y281, and E360. Residue N173 coordinates Mg(2+).

The protein belongs to the transketolase family. DXPS subfamily. As to quaternary structure, homodimer. Mg(2+) is required as a cofactor. It depends on thiamine diphosphate as a cofactor.

The enzyme catalyses D-glyceraldehyde 3-phosphate + pyruvate + H(+) = 1-deoxy-D-xylulose 5-phosphate + CO2. The protein operates within metabolic intermediate biosynthesis; 1-deoxy-D-xylulose 5-phosphate biosynthesis; 1-deoxy-D-xylulose 5-phosphate from D-glyceraldehyde 3-phosphate and pyruvate: step 1/1. In terms of biological role, catalyzes the acyloin condensation reaction between C atoms 2 and 3 of pyruvate and glyceraldehyde 3-phosphate to yield 1-deoxy-D-xylulose-5-phosphate (DXP). This is 1-deoxy-D-xylulose-5-phosphate synthase from Thermus thermophilus (strain ATCC BAA-163 / DSM 7039 / HB27).